The following is a 398-amino-acid chain: Succinate--CoA ligase [ADP-forming] subunit beta (398 aa).

One can recognise an ATP-grasp domain in the interval 9 to 250 (KQLFARYGVP…VDEEDPVELQ (242 aa)). ATP-binding positions include K50, 57-59 (GRG), E104, L107, and E112. Residues N205 and D219 each contribute to the Mg(2+) site. Residues N270 and 327-329 (GIM) contribute to the substrate site.

It belongs to the succinate/malate CoA ligase beta subunit family. Heterotetramer of two alpha and two beta subunits. It depends on Mg(2+) as a cofactor.

The catalysed reaction is succinate + ATP + CoA = succinyl-CoA + ADP + phosphate. The enzyme catalyses GTP + succinate + CoA = succinyl-CoA + GDP + phosphate. The protein operates within carbohydrate metabolism; tricarboxylic acid cycle; succinate from succinyl-CoA (ligase route): step 1/1. Succinyl-CoA synthetase functions in the citric acid cycle (TCA), coupling the hydrolysis of succinyl-CoA to the synthesis of either ATP or GTP and thus represents the only step of substrate-level phosphorylation in the TCA. The beta subunit provides nucleotide specificity of the enzyme and binds the substrate succinate, while the binding sites for coenzyme A and phosphate are found in the alpha subunit. The polypeptide is Succinate--CoA ligase [ADP-forming] subunit beta (Sorangium cellulosum (strain So ce56) (Polyangium cellulosum (strain So ce56))).